Reading from the N-terminus, the 416-residue chain is CinA-like protein (416 aa).

Belongs to the CinA family.

The protein is CinA-like protein of Solibacter usitatus (strain Ellin6076).